Reading from the N-terminus, the 191-residue chain is Large ribosomal subunit protein uL6 (191 aa).

Belongs to the universal ribosomal protein uL6 family. Part of the 50S ribosomal subunit.

In terms of biological role, this protein binds to the 23S rRNA, and is important in its secondary structure. It is located near the subunit interface in the base of the L7/L12 stalk, and near the tRNA binding site of the peptidyltransferase center. This Gloeobacter violaceus (strain ATCC 29082 / PCC 7421) protein is Large ribosomal subunit protein uL6.